The chain runs to 134 residues: Large ribosomal subunit protein uL22 (134 aa).

Belongs to the universal ribosomal protein uL22 family. In terms of assembly, part of the 50S ribosomal subunit. Contacts protein L32.

In terms of biological role, this protein binds specifically to 23S rRNA; its binding is stimulated by other ribosomal proteins, e.g. L4, L17, and L20. It is important during the early stages of 50S assembly. It makes multiple contacts with different domains of the 23S rRNA in the assembled 50S subunit and ribosome. Functionally, the globular domain of the protein is located by the polypeptide exit tunnel on the outside of the subunit while an extended beta-hairpin forms part of the wall of the tunnel. Forms a pair of 'tweezers' with L32 that hold together two different domains of the 23S rRNA. Interacts with the tunnel-blocking modified macrolide azithromycin. Upon binding of the macrolide troleadomycin to the ribosome, the tip of the beta-hairpin is displaced, which severely restricts the tunnel. This and experiments in E.coli have led to the suggestion that it is part of the gating mechanism involved in translation arrest in the absence of the protein export system. This Deinococcus radiodurans (strain ATCC 13939 / DSM 20539 / JCM 16871 / CCUG 27074 / LMG 4051 / NBRC 15346 / NCIMB 9279 / VKM B-1422 / R1) protein is Large ribosomal subunit protein uL22 (rplV).